A 394-amino-acid polypeptide reads, in one-letter code: Elongation factor Tu (394 aa).

The tr-type G domain occupies 10 to 204 (KPHVNVGTIG…ALDTYIPEPE (195 aa)). The tract at residues 19 to 26 (GHVDHGKT) is G1. Residue 19 to 26 (GHVDHGKT) participates in GTP binding. Threonine 26 is a Mg(2+) binding site. The tract at residues 60–64 (GITIA) is G2. The tract at residues 81–84 (DCPG) is G3. GTP-binding positions include 81–85 (DCPGH) and 136–139 (NKCD). Residues 136–139 (NKCD) are G4. Positions 174-176 (SAL) are G5.

It belongs to the TRAFAC class translation factor GTPase superfamily. Classic translation factor GTPase family. EF-Tu/EF-1A subfamily. In terms of assembly, monomer.

It is found in the cytoplasm. The catalysed reaction is GTP + H2O = GDP + phosphate + H(+). GTP hydrolase that promotes the GTP-dependent binding of aminoacyl-tRNA to the A-site of ribosomes during protein biosynthesis. In Vibrio parahaemolyticus serotype O3:K6 (strain RIMD 2210633), this protein is Elongation factor Tu.